We begin with the raw amino-acid sequence, 227 residues long: Transmembrane emp24 domain-containing protein 1 (227 aa).

Positions 1 to 24 (MMAAGAAVALALWLLLPAVGVGEA) are cleaved as a signal peptide. Topologically, residues 25–194 (GPPPIQDGEF…LQEDNLERVN (170 aa)) are extracellular. Residues 43 to 125 (KQCFYQSAPA…EKLVFFELIF (83 aa)) form the GOLD domain. Residues 145–170 (EMLDVKMEDIKESIETMRTRLERSIQ) are a coiled coil. Residues 195–215 (FWSAANVAVLLLVAVLQVCTL) traverse the membrane as a helical segment. The Cytoplasmic segment spans residues 216-227 (KRFFHDKRPVPT). Positions 218–219 (FF) match the COPII vesicle coat-binding motif. Positions 218–227 (FFHDKRPVPT) match the COPI vesicle coat-binding motif.

It belongs to the EMP24/GP25L family. As to quaternary structure, homodimer in endoplasmic reticulum, endoplasmic reticulum-Golgi intermediate compartment and cis-Golgi network. Interacts with IL1RL1. Interacts with RNF26; this interaction is important to modulate innate immune signaling through the cGAS-STING pathway. As to expression, widely expressed.

It localises to the cell membrane. The protein resides in the endoplasmic reticulum membrane. It is found in the golgi apparatus. The protein localises to the cis-Golgi network membrane. Its subcellular location is the endoplasmic reticulum-Golgi intermediate compartment membrane. Functionally, potential role in vesicular protein trafficking, mainly in the early secretory pathway. May act as a cargo receptor at the lumenal side for incorporation of secretory cargo molecules into transport vesicles and may be involved in vesicle coat formation at the cytoplasmic side. Plays a positive role in IL-33-mediated IL-8 and IL-6 production by interacting with interleukin-33 receptor IL1RL1. Plays also a role in the modulation of innate immune signaling through the cGAS-STING pathway by interacting with RNF26. The chain is Transmembrane emp24 domain-containing protein 1 (Tmed1) from Mus musculus (Mouse).